A 157-amino-acid chain; its full sequence is 2-C-methyl-D-erythritol 2,4-cyclodiphosphate synthase (157 aa).

A divalent metal cation is bound by residues Asp8 and His10. 4-CDP-2-C-methyl-D-erythritol 2-phosphate-binding positions include 8–10 and 34–35; these read DVH and HS. Position 42 (His42) interacts with a divalent metal cation. Residues 56–58, 61–65, 132–135, Phe139, and Arg142 contribute to the 4-CDP-2-C-methyl-D-erythritol 2-phosphate site; these read DLG, FPDTD, and TTTE.

This sequence belongs to the IspF family. In terms of assembly, homotrimer. Requires a divalent metal cation as cofactor.

It catalyses the reaction 4-CDP-2-C-methyl-D-erythritol 2-phosphate = 2-C-methyl-D-erythritol 2,4-cyclic diphosphate + CMP. It functions in the pathway isoprenoid biosynthesis; isopentenyl diphosphate biosynthesis via DXP pathway; isopentenyl diphosphate from 1-deoxy-D-xylulose 5-phosphate: step 4/6. Its function is as follows. Involved in the biosynthesis of isopentenyl diphosphate (IPP) and dimethylallyl diphosphate (DMAPP), two major building blocks of isoprenoid compounds. Catalyzes the conversion of 4-diphosphocytidyl-2-C-methyl-D-erythritol 2-phosphate (CDP-ME2P) to 2-C-methyl-D-erythritol 2,4-cyclodiphosphate (ME-CPP) with a corresponding release of cytidine 5-monophosphate (CMP). This chain is 2-C-methyl-D-erythritol 2,4-cyclodiphosphate synthase, found in Salinibacter ruber (strain DSM 13855 / M31).